Here is a 310-residue protein sequence, read N- to C-terminus: MSSELSVDHLLGIKYLKPEDIELIFKTADHFKEVINRPIKKVPSLRDITIANLFFENSTRTRLSFELAEKRLSADVINFSAASSSVKKGETLIDTVNNILSMKVDMVVMRHPNPGAGIFLSKHVDASIINAGDGAHEHPTQALLDSYSIREKLGDVRGKKVVIVGDILHSRVALSNIFALKLQGAEVKVCGPKTLLPKHIESLGVGVEMNLKTALEWCDVANMLRVQNERMDISYFPSTREYVKQFGLNKKLLDSLKKEIVIMHPGPINRGVEITSDVADSEHAIILDQVQNGVAVRMAVIYLLASKIKQ.

Residues R60 and T61 each coordinate carbamoyl phosphate. K88 serves as a coordination point for L-aspartate. R110, H138, and Q141 together coordinate carbamoyl phosphate. Positions 171 and 225 each coordinate L-aspartate. Carbamoyl phosphate is bound by residues G266 and P267.

This sequence belongs to the aspartate/ornithine carbamoyltransferase superfamily. ATCase family. In terms of assembly, heterododecamer (2C3:3R2) of six catalytic PyrB chains organized as two trimers (C3), and six regulatory PyrI chains organized as three dimers (R2).

The enzyme catalyses carbamoyl phosphate + L-aspartate = N-carbamoyl-L-aspartate + phosphate + H(+). The protein operates within pyrimidine metabolism; UMP biosynthesis via de novo pathway; (S)-dihydroorotate from bicarbonate: step 2/3. In terms of biological role, catalyzes the condensation of carbamoyl phosphate and aspartate to form carbamoyl aspartate and inorganic phosphate, the committed step in the de novo pyrimidine nucleotide biosynthesis pathway. The protein is Aspartate carbamoyltransferase catalytic subunit of Christiangramia forsetii (strain DSM 17595 / CGMCC 1.15422 / KT0803) (Gramella forsetii).